The chain runs to 177 residues: Large ribosomal subunit protein uL6 (177 aa).

The protein belongs to the universal ribosomal protein uL6 family. Part of the 50S ribosomal subunit.

Functionally, this protein binds to the 23S rRNA, and is important in its secondary structure. It is located near the subunit interface in the base of the L7/L12 stalk, and near the tRNA binding site of the peptidyltransferase center. The protein is Large ribosomal subunit protein uL6 of Herminiimonas arsenicoxydans.